We begin with the raw amino-acid sequence, 113 residues long: uncharacterized protein (113 aa).

The interval C28–E55 is disordered.

This is an uncharacterized protein from Human cytomegalovirus (strain AD169) (HHV-5).